The chain runs to 134 residues: Large-conductance mechanosensitive channel (134 aa).

2 consecutive transmembrane segments (helical) span residues 16–36 (VIDL…VTAL) and 84–104 (INTL…IKVI).

It belongs to the MscL family. Homopentamer.

Its subcellular location is the cell inner membrane. Its function is as follows. Channel that opens in response to stretch forces in the membrane lipid bilayer. May participate in the regulation of osmotic pressure changes within the cell. This chain is Large-conductance mechanosensitive channel, found in Stenotrophomonas maltophilia (strain R551-3).